The sequence spans 167 residues: Transmembrane protein 229B (167 aa).

Topologically, residues 1 to 14 are cytoplasmic; the sequence is MAAAEPLTAFSRWY. Residues 15-35 form a helical membrane-spanning segment; that stretch reads LYAIHGYFCEVMFTAAWEFVV. At 36 to 40 the chain is on the extracellular side; the sequence is NFNWK. A helical transmembrane segment spans residues 41 to 61; sequence FPGVTSVWALFIYGTSILIVE. Residues 62-72 lie on the Cytoplasmic side of the membrane; sequence KMYLYLKDKCH. The helical transmembrane segment at 73–93 threads the bilayer; it reads ILVRCFIYTLWTYLWEFTTGL. Residues 94 to 109 are Extracellular-facing; the sequence is ILRQFNACPWDYSQFD. Residues 110–130 form a helical membrane-spanning segment; that stretch reads FDFMGLITLEYAIPWFCASFI. Over 131 to 167 the chain is Cytoplasmic; sequence MEQLVIRNTLRLRFDETAEPGAPTVPVALANGHVKTD.

This sequence belongs to the TMEM229 family.

The protein localises to the membrane. This is Transmembrane protein 229B (TMEM229B) from Gallus gallus (Chicken).